The chain runs to 136 residues: Biopolymer transport protein exbD2 (136 aa).

Over 1 to 23 the chain is Cytoplasmic; sequence MAFSTGGNRGPMADINVTPLVDV. Residues 24–44 form a helical membrane-spanning segment; that stretch reads MLVLLIIFIVTAPIMTYPIAV. The Periplasmic segment spans residues 45–136; that stretch reads DLPQRVLNPP…SQMKKIGFMQ (92 aa).

It belongs to the ExbD/TolR family. As to quaternary structure, the accessory proteins ExbB and ExbD seem to form a complex with TonB.

It is found in the cell inner membrane. Its function is as follows. Involved in the TonB-dependent energy-dependent transport of various receptor-bound substrates. The polypeptide is Biopolymer transport protein exbD2 (exbD2) (Xanthomonas campestris pv. campestris (strain ATCC 33913 / DSM 3586 / NCPPB 528 / LMG 568 / P 25)).